The primary structure comprises 289 residues: DDRGK domain-containing protein 1 (289 aa).

Residues 1–2 are Lumenal-facing; the sequence is MD. The chain crosses the membrane as a helical span at residues 3–23; the sequence is PFILAAIISGIVIIILSIAFL. The Cytoplasmic portion of the chain corresponds to 24-289; that stretch reads RVSQVKPQAA…LINLAPVTVP (266 aa). The tract at residues 65–168 is disordered; that stretch reads RHQAALEEEP…DERKKREQEE (104 aa). The span at 70–85 shows a compositional bias: acidic residues; sequence LEEEPEIQEEADEGAP. Over residues 87 to 166 the composition is skewed to basic and acidic residues; sequence IDQKIDFDDK…AEDERKKREQ (80 aa).

This sequence belongs to the DDRGK1 family. Interacts with Atg9; the interaction is transient.

It is found in the endoplasmic reticulum membrane. Functionally, substrate adapter for ufmylation, the covalent attachment of the ubiquitin-like modifier UFM1 to substrate proteins. Required for ufmylation of Atg9; protects the nervous system during aging, possibly by stabilizing Atg9 and supporting its function. The polypeptide is DDRGK domain-containing protein 1 (Bombyx mori (Silk moth)).